The following is a 281-amino-acid chain: HTH-type transcriptional activator RamA (281 aa).

Residues 213-278 form the HTH luxR-type domain; it reads RIKQTTKLSA…EAVNAARRIG (66 aa).

Its function is as follows. RamA is a master regulator of acetate metabolism. It positively controls the expression of acnA, aceA, aceB, ack, pta and ramB genes in the presence of acetate. RamA is also a positive regulator of rpf2 gene expression during growth on glucose as the sole carbon source. In Corynebacterium glutamicum (strain ATCC 13032 / DSM 20300 / JCM 1318 / BCRC 11384 / CCUG 27702 / LMG 3730 / NBRC 12168 / NCIMB 10025 / NRRL B-2784 / 534), this protein is HTH-type transcriptional activator RamA.